The following is a 592-amino-acid chain: Serine/threonine-protein kinase ksg1 (592 aa).

Over residues 1–10 (MRNTHNPNET) the composition is skewed to polar residues. Residues 1–92 (MRNTHNPNET…NPSSGASTPN (92 aa)) form a disordered region. The span at 11-22 (EASEDAENDTQS) shows a compositional bias: acidic residues. The span at 27–37 (SFDHGSSEKLN) shows a compositional bias: basic and acidic residues. Over residues 42 to 68 (PKTQNSAIPQSNALNTTPNESTSQIDS) the composition is skewed to polar residues. A phosphoserine mark is found at serine 64 and serine 69. The span at 80 to 92 (STPNPSSGASTPN) shows a compositional bias: polar residues. The Protein kinase domain maps to 99-366 (FKFGEILGEG…VDEIHQHPFF (268 aa)). Residues 109–111 (SYS) and lysine 128 each bind ATP. Residues 130–175 (LDKRHIIKEKKEKYVNIEKEALCILSKHPGFIKLFYTFQDAHNLYF) form a PIF-pocket region. ATP contacts are provided by residues 178-180 (SLA) and glutamate 184. Aspartate 223 (proton acceptor) is an active-site residue. 2 residues coordinate ATP: glutamate 227 and aspartate 241. A PH domain is found at 461–572 (ISKIGTLNVY…ELLDKASSIS (112 aa)).

It belongs to the protein kinase superfamily. AGC Ser/Thr protein kinase family. PDPK1 subfamily.

It is found in the cytoplasm. It catalyses the reaction L-seryl-[protein] + ATP = O-phospho-L-seryl-[protein] + ADP + H(+). It carries out the reaction L-threonyl-[protein] + ATP = O-phospho-L-threonyl-[protein] + ADP + H(+). Functionally, involved in the control of sexual development and cell growth under stressed conditions. Phosphorylates AGC kinase gad8 at 'Thr-387', activating gad8 kinase activity and promoting sexual development. Phosphorylates AGC kinase psk1 at 'Ser-248', activating psk1 kinase activity and promoting phosphorylation of ribosomal protein S6. The sequence is that of Serine/threonine-protein kinase ksg1 from Schizosaccharomyces pombe (strain 972 / ATCC 24843) (Fission yeast).